Consider the following 760-residue polypeptide: MDTSGSTTDFGDHVVLRYGGTKEMVPLIRHEQMLDMLMERARQIVQGFGSLDTRNMYLFRHEYNSPTLLFPITSPSQIASFSKNPGCILEIILVDRTETAVIPHVVEPESYMLPTFCDFCGELLTGLLRQGVKCKNCNRNFHKRVRMQQGIIVEHLDPLPQDRGLLDRPCYPHCHQRLLEFRCPRCQRLLVSLPHTLIEHSYRQFTVCKVCDHLLVGLMKQGLKCRDCGVNVHRKCAMELPSNCILSENAISRVNFADSEAEQASSSDNIPLFRLPDDIKIKKKFKKKFLHREKRIEKYVFSRPPGQVGVRATEKKNLEGWMIHFILSDPERRLKHYWMMQNNAIHLYNEYSEGIGVNPNRVYRIIPLAEITSVVQNNGKSVLAKHPPHCFEIRTTTNTVFCVGEDYHAFSGGPPKKIPRSMSVRPTSNTTMWFQFIKESLQPPSRNNEENAEQALEFANLYQVLSDKTLGSGQFGTVYSAIQRHSGKEVAVKVISKERFSKKGSGAESMRAEVAILQQTCHPGIVCLEFMCETKDKIFVVMEKMNGDMLEMILSQELGRLNSRATKFLLVQILCALKYLHDQGIAHCDLKPENVLLSDMGSNFPQTKICDFGYARFIPESQFRKTVVGTPAYLPPEVLQRKGYNKSLDMWSVGVIIYVTLSGTFPFNEGEEVSISEQIQNASFMFPTEPWSEVEPLAVDLIQKLLKVEIEARMSIEKCLEHGWLKGEQLYRDLRDLEVRLNTPRYLTSPQDDVLYGPLR.

Phorbol-ester/DAG-type zinc fingers lie at residues 103–153 and 194–244; these read PHVV…GIIV and PHTL…PSNC. A PH domain is found at 316-444; it reads KNLEGWMIHF…QFIKESLQPP (129 aa). Residues 464 to 725 form the Protein kinase domain; the sequence is VLSDKTLGSG…IEKCLEHGWL (262 aa). Residues 470–478 and Lys-493 contribute to the ATP site; that span reads LGSGQFGTV. Catalysis depends on Asp-589, which acts as the Proton acceptor. Thr-626 carries the post-translational modification Phosphothreonine.

The protein belongs to the protein kinase superfamily. CAMK Ser/Thr protein kinase family. PKD subfamily. The cofactor is Mg(2+). In terms of processing, prolonged phosphorylation at Thr-626 results in ubiquitination and degradation.

The protein resides in the cytoplasm. Its subcellular location is the membrane. It carries out the reaction L-seryl-[protein] + ATP = O-phospho-L-seryl-[protein] + ADP + H(+). The catalysed reaction is L-threonyl-[protein] + ATP = O-phospho-L-threonyl-[protein] + ADP + H(+). With respect to regulation, activated by DAG and phorbol esters. Phorbol-ester/DAG-type domain 1 binds phorbol ester with high affinity and mediates accumulation at the cell periphery. Phorbol-ester/DAG-type domain 2 binds phorbol ester with low affinity but may mediate initial contact, resulting in a conformational change allowing previously occluded domain 1 to anchor the kinase. Phosphorylation on Thr-626 is then also required for activation and may also result in a further conformational change. Its function is as follows. Converts transient diacylglycerol (DAG) signals into prolonged physiological effects, independently of PKC. Role in the regulation of growth and neuromuscular control of movement. Involved in immune response to S.aureus bacterium by activating transcription factor hlh-30 downstream of phospholipase plc-1. This chain is Serine/threonine-protein kinase dkf-1, found in Caenorhabditis briggsae.